The following is a 1071-amino-acid chain: Tricorn protease (1071 aa).

The six-bladed beta propeller stretch occupies residues 39 to 310 (MPNLLLNPDI…EKIEKIEIGD (272 aa)). Residues 131–132 (RR) are binds the substrate's C-terminus. The interval 326-675 (AEDFSPLDGD…EDERTVETDK (350 aa)) is seven-bladed beta propeller. Residues 679-745 (VSSIHEEFLQ…VEMQGEYRTS (67 aa)) are C-1; helical bundle. Catalysis depends on His746, which acts as the Charge relay system. Residues 761 to 855 (RSGRIACDFK…DLMIDILDDD (95 aa)) form a PDZ-like region. Positions 856-1061 (RFIRYRSWVE…IDALIEELRN (206 aa)) are C-2; alpha-beta sandwich. A substrate-binding site is contributed by 916–918 (GGG). Ser965 acts as the Nucleophile in catalysis. Position 993–995 (993–995 (GIT)) interacts with substrate. Catalysis depends on Glu1023, which acts as the Charge relay system.

It belongs to the peptidase S41B family. As to quaternary structure, part of the Tricorn proteolytic complex. Assembles to form a hexameric toroid, 20 copies of which may then assemble to form an icosahedral supermolecule of 14.6 MDa.

It is found in the cytoplasm. Functionally, tricorn degrades oligopeptides (probably derived from the proteasome) and channels the products to F1, F2 and F3 proteases, which then catalyze the terminal degradation step, yielding free amino acids. The protein is Tricorn protease (tri) of Thermoplasma acidophilum (strain ATCC 25905 / DSM 1728 / JCM 9062 / NBRC 15155 / AMRC-C165).